The chain runs to 314 residues: tRNA dimethylallyltransferase (314 aa).

11-18 (GPTASGKT) serves as a coordination point for ATP. 13-18 (TASGKT) is a binding site for substrate. Interaction with substrate tRNA stretches follow at residues 36–39 (DSAL), 160–164 (QRINR), 241–246 (RCVGYR), and 274–281 (KRQITWLR).

Belongs to the IPP transferase family. As to quaternary structure, monomer. It depends on Mg(2+) as a cofactor.

It catalyses the reaction adenosine(37) in tRNA + dimethylallyl diphosphate = N(6)-dimethylallyladenosine(37) in tRNA + diphosphate. Catalyzes the transfer of a dimethylallyl group onto the adenine at position 37 in tRNAs that read codons beginning with uridine, leading to the formation of N6-(dimethylallyl)adenosine (i(6)A). The polypeptide is tRNA dimethylallyltransferase (Glaesserella parasuis serovar 5 (strain SH0165) (Haemophilus parasuis)).